A 248-amino-acid polypeptide reads, in one-letter code: 2,3-bisphosphoglycerate-dependent phosphoglycerate mutase (248 aa).

Substrate-binding positions include 8–15 (RHGESTWN), 21–22 (TG), R60, 87–90 (ERHY), K98, 114–115 (RR), and 183–184 (GN). Catalysis depends on H9, which acts as the Tele-phosphohistidine intermediate. The active-site Proton donor/acceptor is E87.

Belongs to the phosphoglycerate mutase family. BPG-dependent PGAM subfamily. In terms of assembly, homodimer.

It carries out the reaction (2R)-2-phosphoglycerate = (2R)-3-phosphoglycerate. It functions in the pathway carbohydrate degradation; glycolysis; pyruvate from D-glyceraldehyde 3-phosphate: step 3/5. In terms of biological role, catalyzes the interconversion of 2-phosphoglycerate and 3-phosphoglycerate. The protein is 2,3-bisphosphoglycerate-dependent phosphoglycerate mutase of Burkholderia ambifaria (strain ATCC BAA-244 / DSM 16087 / CCUG 44356 / LMG 19182 / AMMD) (Burkholderia cepacia (strain AMMD)).